The chain runs to 121 residues: Acidic phospholipase A2 PLA-1 (121 aa).

Intrachain disulfides connect C26-C115, C28-C44, C43-C95, C49-C121, C50-C88, C57-C81, and C75-C86. Residues Y27, G29, and G31 each coordinate Ca(2+). H47 is an active-site residue. Ca(2+) is bound at residue D48. D89 is an active-site residue.

It belongs to the phospholipase A2 family. Group II subfamily. D49 sub-subfamily. Requires Ca(2+) as cofactor. Expressed by the venom gland.

It is found in the secreted. The catalysed reaction is a 1,2-diacyl-sn-glycero-3-phosphocholine + H2O = a 1-acyl-sn-glycero-3-phosphocholine + a fatty acid + H(+). Functionally, PLA2 catalyzes the calcium-dependent hydrolysis of the 2-acyl groups in 3-sn-phosphoglycerides. This chain is Acidic phospholipase A2 PLA-1, found in Eristicophis macmahoni (Leaf-nosed viper).